The chain runs to 439 residues: MESWSRCLERLETEFPPEDVHTWLRPLQADQRGDSVVLYAPNPFIIELVEERYLGRLRELLSYFSGIREVVLAIGSRPKTTELPVPVDTTGRLSSTVPFNGNLDTHYNFDNFVEGRSNQLARAAAWQAAQKPGDRTHNPLLLYGGTGLGKTHLMFAAGNVMRQVNPTYKVMYLRSEQFFSAMIRALQDKSMDQFKRQFHQIDALLIDDIQFFAGKDRTQEEFFHTFNALFDGKQQIILTCDRYPREVNGLEPRLKSRLAWGLSVAIDPPDFETRAAIVLAKARERGATIPDEVAFLIAKKMHSNVRDLEGALNTLVARANFTGRAVTIEFSQETLRDLLRAQQQTIGIPNIQKIVADYYGLQIKDLLSKRRTRSLARPRQLAMALAKELTEHSLPEIGDAFAGRDHTTVLHACRQIKLLMETETKLREDWDKLMRKFSE.

A domain I, interacts with DnaA modulators region spans residues 1 to 75 (MESWSRCLER…GIREVVLAIG (75 aa)). Positions 75–101 (GSRPKTTELPVPVDTTGRLSSTVPFNG) are domain II. The tract at residues 102 to 319 (NLDTHYNFDN…GALNTLVARA (218 aa)) is domain III, AAA+ region. The ATP site is built by glycine 147, glycine 149, lysine 150, and threonine 151. The domain IV, binds dsDNA stretch occupies residues 320–439 (NFTGRAVTIE…WDKLMRKFSE (120 aa)).

Belongs to the DnaA family. As to quaternary structure, oligomerizes as a right-handed, spiral filament on DNA at oriC.

Its subcellular location is the cytoplasm. Its function is as follows. Plays an essential role in the initiation and regulation of chromosomal replication. ATP-DnaA binds to the origin of replication (oriC) to initiate formation of the DNA replication initiation complex once per cell cycle. Binds the DnaA box (a 9 base pair repeat at the origin) and separates the double-stranded (ds)DNA. Forms a right-handed helical filament on oriC DNA; dsDNA binds to the exterior of the filament while single-stranded (ss)DNA is stabiized in the filament's interior. The ATP-DnaA-oriC complex binds and stabilizes one strand of the AT-rich DNA unwinding element (DUE), permitting loading of DNA polymerase. After initiation quickly degrades to an ADP-DnaA complex that is not apt for DNA replication. Binds acidic phospholipids. In Xylella fastidiosa (strain 9a5c), this protein is Chromosomal replication initiator protein DnaA.